The following is a 448-amino-acid chain: UPF0210 protein PAE3581 (448 aa).

Belongs to the UPF0210 family.

This Pyrobaculum aerophilum (strain ATCC 51768 / DSM 7523 / JCM 9630 / CIP 104966 / NBRC 100827 / IM2) protein is UPF0210 protein PAE3581.